Consider the following 259-residue polypeptide: Chymotrypsin-1 (259 aa).

Residues 1–17 (MLRKVFAVVSVLLVVSA) form the signal peptide. Residues 18–32 (AKVTKLVLDDNYVNR) constitute a propeptide, activation peptide. The Peptidase S1 domain occupies 33–255 (VVGGEVAKNG…YHDWVRTTMA (223 aa)). The cysteines at positions 59 and 75 are disulfide-linked. Active-site charge relay system residues include histidine 74 and aspartate 119. 2 disulfide bridges follow: cysteine 182-cysteine 198 and cysteine 208-cysteine 232. The Charge relay system role is filled by serine 212.

Belongs to the peptidase S1 family. In terms of tissue distribution, after blood feeding, expression is induced in the midgut epithelium, followed by secretion into the midgut lumen.

It is found in the secreted. The enzyme catalyses Preferential cleavage: Tyr-|-Xaa, Trp-|-Xaa, Phe-|-Xaa, Leu-|-Xaa.. This chain is Chymotrypsin-1 (CHYM1), found in Anopheles gambiae (African malaria mosquito).